Consider the following 151-residue polypeptide: Caveolin-3 (151 aa).

Over 1 to 83 the chain is Cytoplasmic; it reads MMAEERTDLE…RLLSTLLGVP (83 aa). A Glycyl lysine isopeptide (Lys-Gly) (interchain with G-Cter in SUMO3) cross-link involves residue K38. Positions 64 to 114 are required for interaction with DAG1; sequence TFTVSKYWCYRLLSTLLGVPLALLWGFLFACISFCHIWAVVPCIKSYLIEI. The segment at residues 84–104 is an intramembrane region (helical); that stretch reads LALLWGFLFACISFCHIWAVV. Over 105–151 the chain is Cytoplasmic; it reads PCIKSYLIEIQCISHIYSLCIRTFCNPVFAALGQVCSNIKVMLRKEV.

This sequence belongs to the caveolin family. As to quaternary structure, homooligomer. Interacts with DYSF. Interacts with DLG1 and KCNA5; forms a ternary complex. Interacts with DAG1 (via its C-terminal); the interaction prevents binding of DAG1 with DMD. Interacts with TRIM72. Interacts with MUSK; may regulate MUSK signaling. Interacts with POPDC1. Interacts with CAVIN1, CAVIN2 and CAVIN4. In terms of processing, sumoylation with SUMO3 by PIAS4 may reduce agonist-induced internalization and desensitization of adrenergic receptor ABRD2. Expressed specifically in skeletal muscle and heart.

Its subcellular location is the golgi apparatus membrane. It localises to the cell membrane. The protein localises to the membrane. It is found in the caveola. The protein resides in the sarcolemma. In terms of biological role, may act as a scaffolding protein within caveolar membranes. Interacts directly with G-protein alpha subunits and can functionally regulate their activity. May also regulate voltage-gated potassium channels. Plays a role in the sarcolemma repair mechanism of both skeletal muscle and cardiomyocytes that permits rapid resealing of membranes disrupted by mechanical stress. Mediates the recruitment of CAVIN2 and CAVIN3 proteins to the caveolae. This chain is Caveolin-3 (CAV3), found in Sus scrofa (Pig).